The chain runs to 178 residues: Large ribosomal subunit protein uL6 (178 aa).

Belongs to the universal ribosomal protein uL6 family. In terms of assembly, part of the 50S ribosomal subunit.

Its function is as follows. This protein binds to the 23S rRNA, and is important in its secondary structure. It is located near the subunit interface in the base of the L7/L12 stalk, and near the tRNA binding site of the peptidyltransferase center. The protein is Large ribosomal subunit protein uL6 of Halalkalibacterium halodurans (strain ATCC BAA-125 / DSM 18197 / FERM 7344 / JCM 9153 / C-125) (Bacillus halodurans).